A 176-amino-acid polypeptide reads, in one-letter code: Ribosome maturation factor RimM (176 aa).

The 80-residue stretch at 97-176 (DSEFYHRDLI…QILVDWDPDF (80 aa)) folds into the PRC barrel domain.

Belongs to the RimM family. Binds ribosomal protein uS19.

Its subcellular location is the cytoplasm. An accessory protein needed during the final step in the assembly of 30S ribosomal subunit, possibly for assembly of the head region. Essential for efficient processing of 16S rRNA. May be needed both before and after RbfA during the maturation of 16S rRNA. It has affinity for free ribosomal 30S subunits but not for 70S ribosomes. The protein is Ribosome maturation factor RimM of Shewanella frigidimarina (strain NCIMB 400).